Reading from the N-terminus, the 115-residue chain is Large ribosomal subunit protein bL19 (115 aa).

Belongs to the bacterial ribosomal protein bL19 family.

This protein is located at the 30S-50S ribosomal subunit interface and may play a role in the structure and function of the aminoacyl-tRNA binding site. This chain is Large ribosomal subunit protein bL19, found in Nitratidesulfovibrio vulgaris (strain ATCC 29579 / DSM 644 / CCUG 34227 / NCIMB 8303 / VKM B-1760 / Hildenborough) (Desulfovibrio vulgaris).